A 510-amino-acid polypeptide reads, in one-letter code: Cytochrome P450 monooxygenase BOT1 (510 aa).

Residues 16–36 (PLAWAALILASFTLYSVQLVV) form a helical membrane-spanning segment. Cysteine 454 contacts heme. A glycan (N-linked (GlcNAc...) asparagine) is linked at asparagine 476.

The protein belongs to the cytochrome P450 family. The cofactor is heme.

The protein resides in the membrane. Its pathway is secondary metabolite biosynthesis. Cytochrome P450 monooxygenase; part of the gene cluster that mediates the biosynthesis of botrydial. Botrydial is necessary for colonization of plant tissue by the T4 strain. It is a strain-dependent virulence factor since highly aggressive strains like SAS56 or B05 still retain substantial virulence when botrydial synthesis is impaired, since they produce also botcinic acid. The first step of botrydial biosynthesis is performed by the sesquiterpene synthase BOT2 which catalyzes the cyclization of farnesyl diphosphate (FPP) to presilphiperfolan-8-beta-ol (PSP). The cytochrome P450 monooxygenase BOT4 then catalyzes the hydroxylation at C-4 to give a probotryane intermediate. Acetylation of the hydroxyl at C-4 is carried out by the acetyltransferase BOT5, followed by the combined action of the P450 monooxygenases BOT3 and BOT1, to yield finally the glycol, via the regio- and stereospecific hydroxylations at C-10 and C-15 of the probotryane intermediates, respectively. The cleavage of the C10-C15 bond of probotryane skeleton is an intriguing and chemically important reaction, which could be mediated by some of the monooxygenases or by a combination of them. It is possible that either BOT3 or BOT1 would oxidize either the 10- or the 15-hydroxy group to the hydroperoxide derivative, which would then undergo heterolytic fragmentation to give the dialdehyde botrydial. Finally, the dehydrogenase BOT7 might be involved in the conversion of botrydial to dihydrobotrydial. The chain is Cytochrome P450 monooxygenase BOT1 from Botryotinia fuckeliana (Noble rot fungus).